We begin with the raw amino-acid sequence, 245 residues long: tRNA pseudouridine synthase A (245 aa).

Catalysis depends on Asp-52, which acts as the Nucleophile. A substrate-binding site is contributed by Tyr-111.

Belongs to the tRNA pseudouridine synthase TruA family. As to quaternary structure, homodimer.

It carries out the reaction uridine(38/39/40) in tRNA = pseudouridine(38/39/40) in tRNA. Formation of pseudouridine at positions 38, 39 and 40 in the anticodon stem and loop of transfer RNAs. The sequence is that of tRNA pseudouridine synthase A from Afipia carboxidovorans (strain ATCC 49405 / DSM 1227 / KCTC 32145 / OM5) (Oligotropha carboxidovorans).